The primary structure comprises 40 residues: Acyl-CoA-binding protein 2 (40 aa).

Residues 1-15 (ALKEEFEEHAEKAKT) are compositionally biased toward basic and acidic residues. The interval 1-25 (ALKEEFEEHAEKAKTLPENTSSENK) is disordered. Positions 2-40 (LKEEFEEHAEKAKTLPENTSSENKLTLYGLYKQATVGNV) constitute an ACB domain.

It belongs to the ACBP family.

Its subcellular location is the cytoplasm. Binds medium- and long-chain acyl-CoA esters with very high affinity and may function as an intracellular carrier of acyl-CoA esters. The polypeptide is Acyl-CoA-binding protein 2 (Digitalis lanata (Grecian foxglove)).